The chain runs to 135 residues: Large ribosomal subunit protein bL12c (135 aa).

Belongs to the bacterial ribosomal protein bL12 family. As to quaternary structure, homodimer. Part of the ribosomal stalk of the 50S ribosomal subunit. Forms a multimeric L10(L12)X complex, where L10 forms an elongated spine to which 2 to 4 L12 dimers bind in a sequential fashion. Binds GTP-bound translation factors.

Its subcellular location is the plastid. It is found in the chloroplast. Forms part of the ribosomal stalk which helps the ribosome interact with GTP-bound translation factors. Is thus essential for accurate translation. The protein is Large ribosomal subunit protein bL12c of Chara vulgaris (Common stonewort).